We begin with the raw amino-acid sequence, 250 residues long: 23S rRNA (guanine(2535)-N(1))-methyltransferase (250 aa).

The catalysed reaction is guanosine(2535) in 23S rRNA + S-adenosyl-L-methionine = N(1)-methylguanosine(2535) in 23S rRNA + S-adenosyl-L-homocysteine + H(+). Specifically methylates the guanine-2535 in 23S ribosomal RNA. Confers resistance to antibiotic avilamycin, an orthosomycin antibiotic. The sequence is that of 23S rRNA (guanine(2535)-N(1))-methyltransferase (aviRa) from Streptomyces viridochromogenes.